Consider the following 950-residue polypeptide: Leucine--tRNA ligase (950 aa).

The 'HIGH' region motif lies at 42–52 (PYLNGNLHAGH). The 'KMSKS' region signature appears at 629–633 (KMSKS). Lysine 632 lines the ATP pocket. The tract at residues 928-950 (NPPYDPKGRAQNAEPGRPAIYIE) is disordered.

This sequence belongs to the class-I aminoacyl-tRNA synthetase family.

The protein localises to the cytoplasm. The enzyme catalyses tRNA(Leu) + L-leucine + ATP = L-leucyl-tRNA(Leu) + AMP + diphosphate. This chain is Leucine--tRNA ligase, found in Methanothrix thermoacetophila (strain DSM 6194 / JCM 14653 / NBRC 101360 / PT) (Methanosaeta thermophila).